Here is a 767-residue protein sequence, read N- to C-terminus: Transferrin receptor protein 1 (767 aa).

The Cytoplasmic segment spans residues 1–67 (MDQARSAFSN…LTKPKRFNGS (67 aa)). 2 positions are modified to phosphoserine: Ser-9 and Ser-18. Phosphotyrosine is present on Tyr-19. The Endocytosis signal signature appears at 19 to 22 (YTRF). Residue Thr-20 is modified to Phosphothreonine. Ser-23 bears the Phosphoserine mark. A Stop-transfer sequence motif is present at residues 60–63 (KPKR). Residues 68–88 (FCYAVIAVIIFFLIGFMIGYL) form a helical; Signal-anchor for type II membrane protein membrane-spanning segment. Residue Cys-69 is the site of S-palmitoyl cysteine attachment. At 89-767 (GYCKRVEPKS…GDIWDIDNEF (679 aa)) the chain is on the extracellular side. Residues 96 to 110 (PKSECGRSGDSKEIE) are compositionally biased toward basic and acidic residues. Positions 96-122 (PKSECGRSGDSKEIEGTEPPETEEYFP) are disordered. A compositionally biased stretch (acidic residues) spans 111 to 121 (GTEPPETEEYF). N-linked (GlcNAc...) asparagine glycosylation is found at Asn-211, Asn-258, and Asn-324. The region spanning 230–320 (SKATTVTGKL…GTGDPYTPGF (91 aa)) is the PA domain. A ligand-binding region spans residues 576-767 (TMDTYEVLSQ…GDIWDIDNEF (192 aa)). The Cell attachment site motif lies at 653–655 (RGD). The N-linked (GlcNAc...) asparagine glycan is linked to Asn-734.

It belongs to the peptidase M28 family. M28B subfamily. As to quaternary structure, homodimer; disulfide-linked. Binds one transferrin or HFE molecule per subunit. Interacts with SH3BP4. Interacts with STEAP3; facilitates TFRC endocytosis in erythroid precursor cells. Post-translationally, stearoylated by ZDHHC6 which inhibits TFRC-mediated activation of the JNK pathway and promotes mitochondrial fragmentation. Stearoylation does not affect iron uptake.

It localises to the cell membrane. The protein localises to the melanosome. Functionally, cellular uptake of iron occurs via receptor-mediated endocytosis of ligand-occupied transferrin receptor into specialized endosomes. Endosomal acidification leads to iron release. The apotransferrin-receptor complex is then recycled to the cell surface with a return to neutral pH and the concomitant loss of affinity of apotransferrin for its receptor. Transferrin receptor is necessary for development of erythrocytes and the nervous system. Positively regulates T and B cell proliferation through iron uptake. Acts as a lipid sensor that regulates mitochondrial fusion by regulating activation of the JNK pathway. When dietary levels of stearate (C18:0) are low, promotes activation of the JNK pathway, resulting in HUWE1-mediated ubiquitination and subsequent degradation of the mitofusin MFN2 and inhibition of mitochondrial fusion. When dietary levels of stearate (C18:0) are high, TFRC stearoylation inhibits activation of the JNK pathway and thus degradation of the mitofusin MFN2. Mediates uptake of NICOL1 into fibroblasts where it may regulate extracellular matrix production. The chain is Transferrin receptor protein 1 (TFRC) from Equus caballus (Horse).